Reading from the N-terminus, the 136-residue chain is Large ribosomal subunit protein uL16 (136 aa).

It belongs to the universal ribosomal protein uL16 family. As to quaternary structure, part of the 50S ribosomal subunit.

Its function is as follows. Binds 23S rRNA and is also seen to make contacts with the A and possibly P site tRNAs. The polypeptide is Large ribosomal subunit protein uL16 (Rickettsia peacockii (strain Rustic)).